Consider the following 474-residue polypeptide: tRNA-2-methylthio-N(6)-dimethylallyladenosine synthase (474 aa).

The 118-residue stretch at 3 to 120 folds into the MTTase N-terminal domain; the sequence is KKLHIKTWGC…LPEMIDQIEA (118 aa). [4Fe-4S] cluster contacts are provided by Cys12, Cys49, Cys83, Cys157, Cys161, and Cys164. In terms of domain architecture, Radical SAM core spans 143 to 375; the sequence is RADGPSAFVS…QDRITQQAMR (233 aa). Residues 378 to 441 enclose the TRAM domain; sequence RQMLGTVQRI…TNSLRGNFIR (64 aa).

The protein belongs to the methylthiotransferase family. MiaB subfamily. Monomer. It depends on [4Fe-4S] cluster as a cofactor.

The protein resides in the cytoplasm. The enzyme catalyses N(6)-dimethylallyladenosine(37) in tRNA + (sulfur carrier)-SH + AH2 + 2 S-adenosyl-L-methionine = 2-methylsulfanyl-N(6)-dimethylallyladenosine(37) in tRNA + (sulfur carrier)-H + 5'-deoxyadenosine + L-methionine + A + S-adenosyl-L-homocysteine + 2 H(+). Its function is as follows. Catalyzes the methylthiolation of N6-(dimethylallyl)adenosine (i(6)A), leading to the formation of 2-methylthio-N6-(dimethylallyl)adenosine (ms(2)i(6)A) at position 37 in tRNAs that read codons beginning with uridine. The sequence is that of tRNA-2-methylthio-N(6)-dimethylallyladenosine synthase from Shewanella woodyi (strain ATCC 51908 / MS32).